A 274-amino-acid chain; its full sequence is Protein RecA (274 aa).

43 to 50 (GPESSGKT) contributes to the ATP binding site.

The protein belongs to the RecA family.

Its subcellular location is the cytoplasm. In terms of biological role, can catalyze the hydrolysis of ATP in the presence of single-stranded DNA, the ATP-dependent uptake of single-stranded DNA by duplex DNA, and the ATP-dependent hybridization of homologous single-stranded DNAs. It interacts with LexA causing its activation and leading to its autocatalytic cleavage. The polypeptide is Protein RecA (Neisseria pharyngis).